A 400-amino-acid polypeptide reads, in one-letter code: tRNA-specific 2-thiouridylase MnmA (400 aa).

ATP contacts are provided by residues 19-26 and Leu45; that span reads AMSGGVDS. The active-site Nucleophile is Cys113. Cysteines 113 and 210 form a disulfide. Position 137 (Gly137) interacts with ATP. Positions 160–162 are interaction with tRNA; the sequence is RDQ. Cys210 acts as the Cysteine persulfide intermediate in catalysis.

The protein belongs to the MnmA/TRMU family.

The protein resides in the cytoplasm. It catalyses the reaction S-sulfanyl-L-cysteinyl-[protein] + uridine(34) in tRNA + AH2 + ATP = 2-thiouridine(34) in tRNA + L-cysteinyl-[protein] + A + AMP + diphosphate + H(+). Its function is as follows. Catalyzes the 2-thiolation of uridine at the wobble position (U34) of tRNA, leading to the formation of s(2)U34. The chain is tRNA-specific 2-thiouridylase MnmA from Nitrobacter hamburgensis (strain DSM 10229 / NCIMB 13809 / X14).